The chain runs to 180 residues: Ribosome-recycling factor (180 aa).

Residues 135 to 156 (SDLKKDNDLSEDSRHRTEDDIQ) are disordered.

This sequence belongs to the RRF family.

Its subcellular location is the cytoplasm. Responsible for the release of ribosomes from messenger RNA at the termination of protein biosynthesis. May increase the efficiency of translation by recycling ribosomes from one round of translation to another. This is Ribosome-recycling factor from Oenococcus oeni (strain ATCC BAA-331 / PSU-1).